We begin with the raw amino-acid sequence, 269 residues long: GTP cyclohydrolase FolE2 1 (269 aa).

Belongs to the GTP cyclohydrolase IV family.

The enzyme catalyses GTP + H2O = 7,8-dihydroneopterin 3'-triphosphate + formate + H(+). Its pathway is cofactor biosynthesis; 7,8-dihydroneopterin triphosphate biosynthesis; 7,8-dihydroneopterin triphosphate from GTP: step 1/1. Its function is as follows. Converts GTP to 7,8-dihydroneopterin triphosphate. This chain is GTP cyclohydrolase FolE2 1, found in Burkholderia cenocepacia (strain HI2424).